A 271-amino-acid chain; its full sequence is Phosphatidylglycerol--prolipoprotein diacylglyceryl transferase (271 aa).

7 helical membrane-spanning segments follow: residues 21–41 (LAVR…MWLA), 60–80 (LLFA…VIFY), 95–115 (VWTG…AMFW), 124–144 (FFGV…MGRI), 177–197 (QLYE…WFIG), 203–223 (GSVS…VEYV), and 236–256 (FISM…LMMV). Residue R143 coordinates a 1,2-diacyl-sn-glycero-3-phospho-(1'-sn-glycerol).

This sequence belongs to the Lgt family.

It is found in the cell inner membrane. The catalysed reaction is L-cysteinyl-[prolipoprotein] + a 1,2-diacyl-sn-glycero-3-phospho-(1'-sn-glycerol) = an S-1,2-diacyl-sn-glyceryl-L-cysteinyl-[prolipoprotein] + sn-glycerol 1-phosphate + H(+). Its pathway is protein modification; lipoprotein biosynthesis (diacylglyceryl transfer). Functionally, catalyzes the transfer of the diacylglyceryl group from phosphatidylglycerol to the sulfhydryl group of the N-terminal cysteine of a prolipoprotein, the first step in the formation of mature lipoproteins. The polypeptide is Phosphatidylglycerol--prolipoprotein diacylglyceryl transferase (Vibrio cholerae serotype O1 (strain ATCC 39541 / Classical Ogawa 395 / O395)).